Consider the following 735-residue polypeptide: Translation initiation factor IF-2, chloroplastic (735 aa).

In terms of domain architecture, tr-type G spans 239 to 411 (RRAPIVTILG…ILLMADIENY (173 aa)). The G1 stretch occupies residues 248-255 (GHVDHGKT). 248–255 (GHVDHGKT) contacts GTP. A G2 region spans residues 273–277 (GITQK). The tract at residues 298-301 (DTPG) is G3. Residues 298–302 (DTPGH) and 352–355 (NKID) contribute to the GTP site. The G4 stretch occupies residues 352–355 (NKID). Residues 388-390 (SAS) form a G5 region.

It belongs to the TRAFAC class translation factor GTPase superfamily. Classic translation factor GTPase family. IF-2 subfamily.

Its subcellular location is the plastid. It is found in the chloroplast. Functionally, one of the essential components for the initiation of protein synthesis. Protects formylmethionyl-tRNA from spontaneous hydrolysis and promotes its binding to the 30S ribosomal subunits. Also involved in the hydrolysis of GTP during the formation of the 70S ribosomal complex. This chain is Translation initiation factor IF-2, chloroplastic (infB), found in Guillardia theta (Cryptophyte).